We begin with the raw amino-acid sequence, 1067 residues long: Kinesin-like protein KIF11-A (1067 aa).

Residues 18-359 enclose the Kinesin motor domain; the sequence is NIQVVVRCRP…LDYASRAKNI (342 aa). Position 105-112 (105-112) interacts with ATP; sequence GQTGTGKT. Coiled-coil stretches lie at residues 365 to 480, 692 to 721, and 882 to 915; these read VNQK…QEAF, DSSSALSSIQSEYESLKEEIATAQSTHSEG, and QAQEKALTSLVEQVKDDKEMLGEQRLELNEQVQS. Thr-937 is subject to Phosphothreonine; by CDK1. Position 1046 is a phosphoserine; by NEK6 (Ser-1046).

It belongs to the TRAFAC class myosin-kinesin ATPase superfamily. Kinesin family. BimC subfamily. In terms of assembly, heterotetramer of two heavy and two light chains. Interacts with aurka. Phosphorylation of Thr-937 during mitosis controls the association of this protein with the spindle apparatus. Post-translationally, a subset of this protein primarily localized at the spindle pole is phosphorylated by NEK6 during mitosis. In terms of processing, phosphorylated on a serine residue by aurka. In terms of tissue distribution, highly expressed in unfertilized eggs, especially in the germinal vesicle and in the radial yolk-poor channels. Also present in testis.

The protein resides in the cytoplasm. Its subcellular location is the cytoskeleton. The protein localises to the spindle pole. Plus end-directed motor protein required for establishing a bipolar spindle. Associates with both interphase and spindle microtubules. May be involved in nuclear divisions taking place during the development of unfertilized eggs. Required in non-mitotic cells for transport of secretory proteins from the Golgi complex to the cell surface. The polypeptide is Kinesin-like protein KIF11-A (kif11-a) (Xenopus laevis (African clawed frog)).